A 490-amino-acid polypeptide reads, in one-letter code: Phosphoglucosamine mutase (490 aa).

S139 serves as the catalytic Phosphoserine intermediate. Residues S139, D279, D281, and D283 each contribute to the Mg(2+) site. Residue S139 is modified to Phosphoserine.

Belongs to the phosphohexose mutase family. It depends on Mg(2+) as a cofactor. Post-translationally, activated by phosphorylation.

The enzyme catalyses alpha-D-glucosamine 1-phosphate = D-glucosamine 6-phosphate. Catalyzes the conversion of glucosamine-6-phosphate to glucosamine-1-phosphate. In Trichormus variabilis (strain ATCC 29413 / PCC 7937) (Anabaena variabilis), this protein is Phosphoglucosamine mutase.